The sequence spans 253 residues: Phosphonates import ATP-binding protein PhnC (253 aa).

The 244-residue stretch at 4 to 247 folds into the ABC transporter domain; that stretch reads VRFEGVTKRF…QAVAMIYRAG (244 aa). 36–43 is a binding site for ATP; that stretch reads GLSGSGKS.

It belongs to the ABC transporter superfamily. Phosphonates importer (TC 3.A.1.9.1) family. In terms of assembly, the complex is composed of two ATP-binding proteins (PhnC), two transmembrane proteins (PhnE) and a solute-binding protein (PhnD).

Its subcellular location is the cell membrane. The catalysed reaction is phosphonate(out) + ATP + H2O = phosphonate(in) + ADP + phosphate + H(+). Part of the ABC transporter complex PhnCDE involved in phosphonates import. Responsible for energy coupling to the transport system. In Frankia casuarinae (strain DSM 45818 / CECT 9043 / HFP020203 / CcI3), this protein is Phosphonates import ATP-binding protein PhnC.